We begin with the raw amino-acid sequence, 318 residues long: Peptidyl-prolyl cis-trans isomerase CPR4 (318 aa).

Residues 1 to 20 (MWLKSLLLCLYSLVLCQVHA) form the signal peptide. The PPIase cyclophilin-type domain occupies 55-225 (YFDPVSKSMK…HELRFLYFVL (171 aa)). An N-linked (GlcNAc...) asparagine glycan is attached at Asn166. The helical transmembrane segment at 286–303 (ISRALMCLTVLGLCFIAY) threads the bilayer.

It is found in the membrane. It catalyses the reaction [protein]-peptidylproline (omega=180) = [protein]-peptidylproline (omega=0). Functionally, PPIases accelerate the folding of proteins. It catalyzes the cis-trans isomerization of proline imidic peptide bonds in oligopeptides. The polypeptide is Peptidyl-prolyl cis-trans isomerase CPR4 (CPR4) (Saccharomyces cerevisiae (strain ATCC 204508 / S288c) (Baker's yeast)).